The chain runs to 428 residues: Glutamate-1-semialdehyde 2,1-aminomutase (428 aa).

Position 267 is an N6-(pyridoxal phosphate)lysine (Lys267).

The protein belongs to the class-III pyridoxal-phosphate-dependent aminotransferase family. HemL subfamily. Homodimer. It depends on pyridoxal 5'-phosphate as a cofactor.

The protein localises to the cytoplasm. The catalysed reaction is (S)-4-amino-5-oxopentanoate = 5-aminolevulinate. It participates in porphyrin-containing compound metabolism; protoporphyrin-IX biosynthesis; 5-aminolevulinate from L-glutamyl-tRNA(Glu): step 2/2. The protein is Glutamate-1-semialdehyde 2,1-aminomutase of Persephonella marina (strain DSM 14350 / EX-H1).